The chain runs to 364 residues: MIRAFDAVSLPLLRWLDPEDAHRLAIQGLKLWPPVKPRPDDSKLAVRAFGLNFSNPVGIAAGFDKNAEAPDALLRLGFGFVEVGTVTPKPQAGNPRPRLFRLERDEAVINRMGFNNEGAEAVLRRLAARAQYGGIVGVNVGANKDSDDRVADYVKLIETFAPLASYFTVNVSSPNTPGLRNLQQAAALDDLLARVIDARERVRAAAGDTPVLLKIAPDLSLGELDDVVHIARSRRVDGMIVANTTLSRSPTLRERTKMNEQGGLSGRPLFRLSTRMVAETFVRAEGAFPLIGVGGIDSGGAALTKIRAGATLVQLYSALVYKGLGLVESIKADLASTLLRTGRDSLAEIVGADAPMITAEEWPV.

FMN-binding positions include 61–65 and Thr85; that span reads AGFDK. Lys65 contacts substrate. 110-114 contacts substrate; sequence NRMGF. The FMN site is built by Asn139 and Asn170. Substrate is bound at residue Asn170. The active-site Nucleophile is Ser173. Asn175 lines the substrate pocket. The FMN site is built by Lys214 and Ala242. 243–244 contributes to the substrate binding site; sequence NT. FMN-binding positions include Gly266, Gly295, and 316-317; that span reads YS.

It belongs to the dihydroorotate dehydrogenase family. Type 2 subfamily. Monomer. FMN is required as a cofactor.

The protein resides in the cell membrane. The enzyme catalyses (S)-dihydroorotate + a quinone = orotate + a quinol. Its pathway is pyrimidine metabolism; UMP biosynthesis via de novo pathway; orotate from (S)-dihydroorotate (quinone route): step 1/1. Its function is as follows. Catalyzes the conversion of dihydroorotate to orotate with quinone as electron acceptor. The polypeptide is Dihydroorotate dehydrogenase (quinone) (Rhodopseudomonas palustris (strain TIE-1)).